The primary structure comprises 607 residues: MSKIIGIDLGTTNSCMAVMEGGEAVVMPNAEGGRTTPSVVGFSKTGERLVGQVAKRQAISNPERTVTSIKRYMGTDHKVRIEGNEYTPQEISAMILQKMKTDAEAYLGSKVERAVITVPAYFSDAQRQATKDAGRIAGLKVERIINEPTAAALAYGLDKEEDQTILVFDLGGGTFDVSILELGDGVFEVKATSGNNRLGGDDFDQRIIDWIVAEFKKESGIDLSRDRMAMQRLREAAEKAKVELSSVVNTNINLPFITADAEGPKHLDLNLSRAKFEELTADLIEMTMGPTRQAMQDAGLEPKQIDKILLVGGATRMPSVQEAVRRFFGKEPHKGINPDECVAIGAAIQAGVLTGEVKDVVLLDVTPLSLGIETLGGVFTKIIERNTTIPTARSQIFTTAADNQPSVEIHVLQGERQMAAGNKTLGRFNLVGIPPAPRGIPQIEVTFDIDVNGIVNVSAKDLGTGKSQSITITGSTGLSDAEIERMVKEAEQYAEEDRKRREEVEIRNNADALVYQSEKTLKEHRDQADPNQVSELEQAVDRLKKALEGGDIERIKRETENLTGPLHAFTAAMYQKQAQQQQPGPGPDAGKDKDDKDKTVDADYEVK.

At T174 the chain carries Phosphothreonine; by autocatalysis. The segment at 571–607 (AAMYQKQAQQQQPGPGPDAGKDKDDKDKTVDADYEVK) is disordered. The span at 589 to 607 (AGKDKDDKDKTVDADYEVK) shows a compositional bias: basic and acidic residues.

It belongs to the heat shock protein 70 family.

In terms of biological role, acts as a chaperone. This is Chaperone protein DnaK from Desulforudis audaxviator (strain MP104C).